Reading from the N-terminus, the 154-residue chain is UPF0178 protein GM21_2006 (154 aa).

This sequence belongs to the UPF0178 family.

The sequence is that of UPF0178 protein GM21_2006 from Geobacter sp. (strain M21).